Reading from the N-terminus, the 860-residue chain is Anoctamin-7 (860 aa).

Topologically, residues 1-297 (MLRKQAGEED…YFAWLGFYTG (297 aa)) are cytoplasmic. Residues 24-50 (NGCSYGSTAQASEAGKQQVAPSRVGSS) form a disordered region. Residues 298–318 (WLLPAAVVGTVVFLAGCFLVF) form a helical membrane-spanning segment. At 319 to 362 (SDVPTQELCHSSDTFDMCPLCSDCSFWLLSSACTLAQAGRLFDH) the chain is on the extracellular side. Residues 363–383 (GGTVFFSLFMALWAVLLLEYW) form a helical membrane-spanning segment. The Cytoplasmic portion of the chain corresponds to 384-441 (KRKNATLAYRWDCSDYEDIEERPRPQFAATAPMTALNPITGEDEPYFPEKNRVRRMLA). The helical transmembrane segment at 442 to 462 (GSVVLLMMVAVVIMCLVSIIL) threads the bilayer. The Extracellular segment spans residues 463 to 492 (YRAVMAIIVSKSNNAFLSAWASRIASLTGS). A helical transmembrane segment spans residues 493-513 (VVNLVFILILSKVYVILAQVL). At 514–530 (TRWEMHRTQTAFEDAFT) the chain is on the cytoplasmic side. The chain crosses the membrane as a helical span at residues 531–551 (LKVFIFQFVNFYASPVYIAFF). At 552 to 652 (KGRFVGYPGN…FHEYLEMVLQ (101 aa)) the chain is on the extracellular side. A helical membrane pass occupies residues 653-673 (FGFVTIFVAACPLAPLFALLN). Over 674–701 (NWVEIRLDARKFVCEYRRPVAERAQDIG) the chain is Cytoplasmic. The chain crosses the membrane as a helical span at residues 702–722 (IWFHILAGLTHLAVISNAFLL). At 723-779 (AFSSDFLPRVYYSWTRAPDLRGFLNFTLARAPPTFTSAHNRTCRYRAFRDDDGHYSP) the chain is on the extracellular side. Asparagine 747 and asparagine 762 each carry an N-linked (GlcNAc...) asparagine glycan. Residues 780-800 (TYWTLLAIRLAFVIVFEHVVF) form a helical membrane-spanning segment. Topologically, residues 801–860 (STGRFLDLLVPDIPESVEIKVKREYYLAKQALADNEALLGATGVKGEQPPSSEPSLGLPA) are cytoplasmic.

This sequence belongs to the anoctamin family.

The protein resides in the cell membrane. The protein localises to the endoplasmic reticulum. The catalysed reaction is a 1,2-diacyl-sn-glycero-3-phospho-L-serine(in) = a 1,2-diacyl-sn-glycero-3-phospho-L-serine(out). It catalyses the reaction a beta-D-galactosyl-(1&lt;-&gt;1')-N-acylsphing-4-enine(out) = a beta-D-galactosyl-(1&lt;-&gt;1')-N-acylsphing-4-enine(in). The enzyme catalyses a 1,2-diacyl-sn-glycero-3-phosphocholine(in) = a 1,2-diacyl-sn-glycero-3-phosphocholine(out). Functionally, has calcium-dependent phospholipid scramblase activity; scrambles phosphatidylserine, phosphatidylcholine and galactosylceramide. Does not exhibit calcium-activated chloride channel (CaCC) activity. May play a role in cell-cell interactions. This Rattus norvegicus (Rat) protein is Anoctamin-7 (Ano7).